Reading from the N-terminus, the 355-residue chain is Trans-enoyl reductase (355 aa).

45–48 (VDTK) contributes to the NADP(+) binding site. 131–138 (ISFMTTGL) is a substrate binding site. NADP(+) contacts are provided by residues 166–169 (SSAT), 189–192 (SPRN), tyrosine 207, and 254–255 (LE). A substrate-binding site is contributed by 275-279 (GPQML). 344–345 (IS) lines the NADP(+) pocket.

It belongs to the zinc-containing alcohol dehydrogenase family. In terms of assembly, monomer.

The enzyme catalyses L-serine + 7 malonyl-CoA + acetyl-CoA + 2 S-adenosyl-L-methionine + ATP + 8 NADPH + 11 H(+) = (5S)-3-[(2E,6R,8E,10E,12E)-2,6-dimethyltetradeca-2,8,10,12-tetraenoyl]-5-(hydroxymethyl)pyrrolidine-2,4-dione + AMP + 2 S-adenosyl-L-homocysteine + 7 CO2 + diphosphate + 8 NADP(+) + 8 CoA + 6 H2O. Its pathway is mycotoxin biosynthesis. Hybrid PKS-NRPS synthetase; part of the gene cluster that mediates the biosynthesis of trichosetin, a trans-fused decalin-containing tetramic acid with antimicrobial activity. The PKS module of PKS-NRPS1 together with the enoylreductase (ER) catalyze the formation of the polyketide unit which is then conjugated to L-serine by the condensation domain of the PKS-NRPS1 NRPS module. Activity of the Dieckmann cyclase domain (RED) results in release of the Dieckmann product intermediate. Diels-Alderase (DA) is involved in endo-selective Diels-Alder cycloaddition to form the decalin ring, leading to the production of N-desmethylequisetin also called trichosetin. The cluster does not contain the equisetin N-methyltransferase and consequently, trichosetin is isolated as final product. This is Trans-enoyl reductase from Gibberella fujikuroi (strain CBS 195.34 / IMI 58289 / NRRL A-6831) (Bakanae and foot rot disease fungus).